Reading from the N-terminus, the 274-residue chain is 2,3,4,5-tetrahydropyridine-2,6-dicarboxylate N-succinyltransferase (274 aa).

The substrate site is built by R104 and D141.

This sequence belongs to the transferase hexapeptide repeat family. Homotrimer.

It is found in the cytoplasm. It carries out the reaction (S)-2,3,4,5-tetrahydrodipicolinate + succinyl-CoA + H2O = (S)-2-succinylamino-6-oxoheptanedioate + CoA. It participates in amino-acid biosynthesis; L-lysine biosynthesis via DAP pathway; LL-2,6-diaminopimelate from (S)-tetrahydrodipicolinate (succinylase route): step 1/3. This chain is 2,3,4,5-tetrahydropyridine-2,6-dicarboxylate N-succinyltransferase, found in Escherichia coli O127:H6 (strain E2348/69 / EPEC).